We begin with the raw amino-acid sequence, 509 residues long: H/ACA ribonucleoprotein complex subunit DKC1 (509 aa).

The disordered stretch occupies residues 1–24 (MADAEVITFPKKHKKKKDRKPLQE). Ala-2 carries the post-translational modification N-acetylalanine. Positions 2 to 21 (ADAEVITFPKKHKKKKDRKP) are nucleolar localization. A compositionally biased stretch (basic residues) spans 10 to 19 (PKKHKKKKDR). Glycyl lysine isopeptide (Lys-Gly) (interchain with G-Cter in SUMO2) cross-links involve residues Lys-20, Lys-39, and Lys-43. Asp-125 acts as the Nucleophile in catalysis. Residue Lys-191 forms a Glycyl lysine isopeptide (Lys-Gly) (interchain with G-Cter in SUMO2) linkage. The 76-residue stretch at 297-372 (KRLVMKDSAV…VAKIKRVIME (76 aa)) folds into the PUA domain. Ser-387 carries the post-translational modification Phosphoserine. Lys-394 participates in a covalent cross-link: Glycyl lysine isopeptide (Lys-Gly) (interchain with G-Cter in SUMO2). A Glycyl lysine isopeptide (Lys-Gly) (interchain with G-Cter in SUMO1); alternate cross-link involves residue Lys-413. A Glycyl lysine isopeptide (Lys-Gly) (interchain with G-Cter in SUMO2); alternate cross-link involves residue Lys-413. Lys-424 is covalently cross-linked (Glycyl lysine isopeptide (Lys-Gly) (interchain with G-Cter in SUMO2)). The nuclear and nucleolar localization stretch occupies residues 446–509 (KRKRDSESES…KVKVVEEMSE (64 aa)). The interval 447–509 (RKRDSESESD…KVKVVEEMSE (63 aa)) is disordered. Residues Ser-451, Ser-453, and Ser-455 each carry the phosphoserine modification. At Thr-458 the chain carries Phosphothreonine. Positions 466 to 476 (EKKKKKDKKPK) are enriched in basic residues. Ser-481 carries the phosphoserine modification. A Phosphothreonine modification is found at Thr-485. Ser-508 is subject to Phosphoserine.

It belongs to the pseudouridine synthase TruB family. In terms of assembly, part of the H/ACA small nucleolar ribonucleoprotein (H/ACA snoRNP) complex, which contains NHP2/NOLA2, GAR1/NOLA1, NOP10/NOLA3, and DKC1/NOLA4, which is presumed to be the catalytic subunit. The complex contains a stable core formed by binding of one or two NOP10-DKC1 heterodimers to NHP2; GAR1 subsequently binds to this core via DKC1. The complex binds a box H/ACA small nucleolar RNA (snoRNA), which may target the specific site of modification within the RNA substrate. During assembly, the complex contains NAF1 instead of GAR1/NOLA1. The complex also interacts with TERC, which contains a 3'-terminal domain related to the box H/ACA snoRNAs. Specific interactions with snoRNAs or TERC are mediated by GAR1 and NHP2. Associates with NOLC1/NOPP140. H/ACA snoRNPs interact with the SMN complex, consisting of SMN1 or SMN2, GEMIN2/SIP1, DDX20/GEMIN3, and GEMIN4. This is mediated by interaction between GAR1 and SMN1 or SMN2. The SMN complex may be required for correct assembly of the H/ACA snoRNP complex. Component of the telomerase holoenzyme complex composed of one molecule of TERT, one molecule of WRAP53/TCAB1, two molecules of H/ACA ribonucleoprotein complex subunits DKC1, NOP10, NHP2 and GAR1, and a telomerase RNA template component (TERC). The telomerase holoenzyme complex is associated with TEP1, SMG6/EST1A and POT1. Interacts with SHQ1; this interaction may lead to the stabilization of DKC1, from the time of its synthesis until its association with NOP10, NHP2, and NAF1 at the nascent H/ACA RNA. Interacts with HMBOX1. Interacts with DHX36. As to expression, ubiquitously expressed, with elevated levels in Purkinje cells, the olfactory bulb, and Leydig cells of the testis.

It is found in the nucleus. It localises to the nucleolus. The protein resides in the cajal body. The enzyme catalyses uridine in 5S rRNA = pseudouridine in 5S rRNA. Functionally, catalytic subunit of H/ACA small nucleolar ribonucleoprotein (H/ACA snoRNP) complex, which catalyzes pseudouridylation of rRNA. This involves the isomerization of uridine such that the ribose is subsequently attached to C5, instead of the normal N1. Each rRNA can contain up to 100 pseudouridine ('psi') residues, which may serve to stabilize the conformation of rRNAs. Required for ribosome biogenesis and telomere maintenance. Also required for correct processing or intranuclear trafficking of TERC, the RNA component of the telomerase reverse transcriptase (TERT) holoenzyme. This Mus musculus (Mouse) protein is H/ACA ribonucleoprotein complex subunit DKC1 (Dkc1).